Reading from the N-terminus, the 308-residue chain is Elongation factor Ts (308 aa).

Positions 79–82 (TDFV) are involved in Mg(2+) ion dislocation from EF-Tu.

It belongs to the EF-Ts family.

The protein localises to the cytoplasm. Its function is as follows. Associates with the EF-Tu.GDP complex and induces the exchange of GDP to GTP. It remains bound to the aminoacyl-tRNA.EF-Tu.GTP complex up to the GTP hydrolysis stage on the ribosome. The protein is Elongation factor Ts of Bdellovibrio bacteriovorus (strain ATCC 15356 / DSM 50701 / NCIMB 9529 / HD100).